We begin with the raw amino-acid sequence, 1018 residues long: Importin-9 (1018 aa).

Positions 35 to 114 constitute an Importin N-terminal domain; the sequence is TEKRIKQLEY…RNILPNGLYD (80 aa). Residues 921–950 are disordered; sequence GKSDEPLTDSEEDGDDEDAPGNPDKPRYIS. The segment covering 926 to 939 has biased composition (acidic residues); sequence PLTDSEEDGDDEDA.

It belongs to the importin beta family.

The protein localises to the cytoplasm. Its subcellular location is the nucleus. In terms of biological role, nuclear transport receptor that mediates nuclear import of proteins. Serves as receptor for nuclear localization signals (NLS) in cargo substrates. Is thought to mediate docking of the importin/substrate complex to the nuclear pore complex (NPC) through binding to nucleoporin and the complex is subsequently translocated through the pore by an energy requiring, Ran-dependent mechanism. Mediates the import of pre-assembled proteasomes into the nucleus during the late stages of sperm development. This chain is Importin-9, found in Drosophila melanogaster (Fruit fly).